The primary structure comprises 547 residues: CTP synthase (547 aa).

The amidoligase domain stretch occupies residues 1-266 (MTKYIFVTGG…GDYLVERLGL (266 aa)). S13 is a binding site for CTP. S13 provides a ligand contact to UTP. Residue 14–19 (SVGKGI) coordinates ATP. Y54 is an L-glutamine binding site. D71 is a binding site for ATP. Residues D71 and E141 each coordinate Mg(2+). CTP-binding positions include 148 to 150 (DIE), 187 to 192 (KTKPTQ), and K223. UTP contacts are provided by residues 187-192 (KTKPTQ) and K223. Positions 291–533 (PIALVGKYVE…IAAAAQTLLA (243 aa)) constitute a Glutamine amidotransferase type-1 domain. G353 contributes to the L-glutamine binding site. C380 (nucleophile; for glutamine hydrolysis) is an active-site residue. L-glutamine contacts are provided by residues 381-384 (LGMQ), E404, and R461. Catalysis depends on residues H506 and E508.

The protein belongs to the CTP synthase family. In terms of assembly, homotetramer.

The enzyme catalyses UTP + L-glutamine + ATP + H2O = CTP + L-glutamate + ADP + phosphate + 2 H(+). It carries out the reaction L-glutamine + H2O = L-glutamate + NH4(+). It catalyses the reaction UTP + NH4(+) + ATP = CTP + ADP + phosphate + 2 H(+). It participates in pyrimidine metabolism; CTP biosynthesis via de novo pathway; CTP from UDP: step 2/2. With respect to regulation, allosterically activated by GTP, when glutamine is the substrate; GTP has no effect on the reaction when ammonia is the substrate. The allosteric effector GTP functions by stabilizing the protein conformation that binds the tetrahedral intermediate(s) formed during glutamine hydrolysis. Inhibited by the product CTP, via allosteric rather than competitive inhibition. Functionally, catalyzes the ATP-dependent amination of UTP to CTP with either L-glutamine or ammonia as the source of nitrogen. Regulates intracellular CTP levels through interactions with the four ribonucleotide triphosphates. The chain is CTP synthase from Chloroflexus aggregans (strain MD-66 / DSM 9485).